The chain runs to 176 residues: ATP-dependent protease subunit HslV (176 aa).

The active site involves threonine 2. Residues glycine 157, cysteine 160, and threonine 163 each coordinate Na(+).

Belongs to the peptidase T1B family. HslV subfamily. In terms of assembly, a double ring-shaped homohexamer of HslV is capped on each side by a ring-shaped HslU homohexamer. The assembly of the HslU/HslV complex is dependent on binding of ATP.

It is found in the cytoplasm. It catalyses the reaction ATP-dependent cleavage of peptide bonds with broad specificity.. With respect to regulation, allosterically activated by HslU binding. Its function is as follows. Protease subunit of a proteasome-like degradation complex believed to be a general protein degrading machinery. The chain is ATP-dependent protease subunit HslV from Proteus mirabilis (strain HI4320).